The sequence spans 189 residues: ATP-dependent protease subunit HslV (189 aa).

The active site involves Thr12. Residues Ala172, Cys175, and Thr178 each coordinate Na(+).

Belongs to the peptidase T1B family. HslV subfamily. A double ring-shaped homohexamer of HslV is capped on each side by a ring-shaped HslU homohexamer. The assembly of the HslU/HslV complex is dependent on binding of ATP.

Its subcellular location is the cytoplasm. It carries out the reaction ATP-dependent cleavage of peptide bonds with broad specificity.. With respect to regulation, allosterically activated by HslU binding. In terms of biological role, protease subunit of a proteasome-like degradation complex believed to be a general protein degrading machinery. The sequence is that of ATP-dependent protease subunit HslV from Anaplasma phagocytophilum (strain HZ).